The sequence spans 160 residues: UPF0225 protein CGSHiGG_04185 (160 aa).

Belongs to the UPF0225 family.

The protein is UPF0225 protein CGSHiGG_04185 of Haemophilus influenzae (strain PittGG).